The primary structure comprises 376 residues: Putative dihydroorotase (376 aa).

Residues H35 and H37 each contribute to the Zn(2+) site. Substrate contacts are provided by residues 37 to 39 and N66; that span reads HVR. Residues D114, H138, and H187 each contribute to the Zn(2+) site. Position 230 (N230) interacts with substrate. D257 provides a ligand contact to Zn(2+). D257 is an active-site residue. Substrate is bound by residues H261 and 273–274; that span reads YG.

It belongs to the metallo-dependent hydrolases superfamily. DHOase family. Class I DHOase subfamily. Zn(2+) is required as a cofactor.

It carries out the reaction (S)-dihydroorotate + H2O = N-carbamoyl-L-aspartate + H(+). The protein operates within pyrimidine metabolism; UMP biosynthesis via de novo pathway; (S)-dihydroorotate from bicarbonate: step 3/3. Functionally, catalyzes the reversible cyclization of carbamoyl aspartate to dihydroorotate. The sequence is that of Putative dihydroorotase (pyrC) from Thermotoga maritima (strain ATCC 43589 / DSM 3109 / JCM 10099 / NBRC 100826 / MSB8).